A 209-amino-acid chain; its full sequence is Uracil phosphoribosyltransferase (209 aa).

5-phospho-alpha-D-ribose 1-diphosphate contacts are provided by residues arginine 79, arginine 104, and 131 to 139 (DPMLATGGS). Residues isoleucine 194 and 199–201 (GDA) contribute to the uracil site. Aspartate 200 contacts 5-phospho-alpha-D-ribose 1-diphosphate.

The protein belongs to the UPRTase family. The cofactor is Mg(2+).

It carries out the reaction UMP + diphosphate = 5-phospho-alpha-D-ribose 1-diphosphate + uracil. It participates in pyrimidine metabolism; UMP biosynthesis via salvage pathway; UMP from uracil: step 1/1. Its activity is regulated as follows. Allosterically activated by GTP. Catalyzes the conversion of uracil and 5-phospho-alpha-D-ribose 1-diphosphate (PRPP) to UMP and diphosphate. The protein is Uracil phosphoribosyltransferase of Clostridium botulinum (strain Alaska E43 / Type E3).